We begin with the raw amino-acid sequence, 82 residues long: Polyketide biosynthesis acyl-carrier-protein AcpK (82 aa).

Positions 4–79 (QRIFEVLITN…ELAEVLYDKV (76 aa)) constitute a Carrier domain. Ser-39 carries the post-translational modification O-(pantetheine 4'-phosphoryl)serine.

4'-phosphopantetheine is transferred from CoA to a specific serine of apo-ACP by sfp.

Its subcellular location is the cytoplasm. The protein operates within antibiotic biosynthesis; bacillaene biosynthesis. Involved in some intermediate steps for the synthesis of the antibiotic polyketide bacillaene which is involved in secondary metabolism. The chain is Polyketide biosynthesis acyl-carrier-protein AcpK (acpK) from Bacillus subtilis (strain 168).